The primary structure comprises 199 residues: Large ribosomal subunit protein bL25 (199 aa).

This sequence belongs to the bacterial ribosomal protein bL25 family. CTC subfamily. As to quaternary structure, part of the 50S ribosomal subunit; part of the 5S rRNA/L5/L18/L25 subcomplex. Contacts the 5S rRNA. Binds to the 5S rRNA independently of L5 and L18.

In terms of biological role, this is one of the proteins that binds to the 5S RNA in the ribosome where it forms part of the central protuberance. The polypeptide is Large ribosomal subunit protein bL25 (Herpetosiphon aurantiacus (strain ATCC 23779 / DSM 785 / 114-95)).